Consider the following 303-residue polypeptide: Probable 5-dehydro-4-deoxyglucarate dehydratase (303 aa).

The protein belongs to the DapA family.

The catalysed reaction is 5-dehydro-4-deoxy-D-glucarate + H(+) = 2,5-dioxopentanoate + CO2 + H2O. It participates in carbohydrate acid metabolism; D-glucarate degradation; 2,5-dioxopentanoate from D-glucarate: step 2/2. The sequence is that of Probable 5-dehydro-4-deoxyglucarate dehydratase from Pseudomonas savastanoi pv. phaseolicola (strain 1448A / Race 6) (Pseudomonas syringae pv. phaseolicola (strain 1448A / Race 6)).